The chain runs to 143 residues: Nucleoside diphosphate kinase (143 aa).

6 residues coordinate ATP: Lys11, Phe59, Arg87, Thr93, Arg104, and Asn114. The active-site Pros-phosphohistidine intermediate is the His117.

This sequence belongs to the NDK family. Homotetramer. Mg(2+) serves as cofactor.

It localises to the cytoplasm. The catalysed reaction is a 2'-deoxyribonucleoside 5'-diphosphate + ATP = a 2'-deoxyribonucleoside 5'-triphosphate + ADP. It carries out the reaction a ribonucleoside 5'-diphosphate + ATP = a ribonucleoside 5'-triphosphate + ADP. Its function is as follows. Major role in the synthesis of nucleoside triphosphates other than ATP. The ATP gamma phosphate is transferred to the NDP beta phosphate via a ping-pong mechanism, using a phosphorylated active-site intermediate. This is Nucleoside diphosphate kinase from Shewanella sp. (strain MR-4).